The following is a 352-amino-acid chain: O(6)-methylguanine-induced apoptosis 2 (352 aa).

STPGR repeat units follow at residues 80–90, 124–139, 165–171, 205–235, 244–263, 286–295, and 325–335; these read NPGPGAYNVAR, PAPN…FSKK, PAPNQYS, GPSP…KTSR, NPGP…KKII, PGPGHYDIVD, and LPGPGAYHPEI.

The protein belongs to the STPG1 family.

Its subcellular location is the cytoplasm. It is found in the nucleus. Its function is as follows. May positively contribute to the induction of apoptosis triggered by O(6)-methylguanine. The polypeptide is O(6)-methylguanine-induced apoptosis 2 (stpg1) (Xenopus laevis (African clawed frog)).